The following is a 57-amino-acid chain: MGEENSTSGTCKPSKTFKAKCSHMVRKQRAKFYILGRCLAMLVCGRGRDRERDRILI.

The N-linked (GlcNAc...) asparagine glycan is linked to Asn-5. Residues 16 to 47 (TFKAKCSHMVRKQRAKFYILGRCLAMLVCGRG) are required for DVL/RTFL small polypeptide activity. The helical transmembrane segment at 29–45 (RAKFYILGRCLAMLVCG) threads the bilayer.

Belongs to the DVL/RTFL small polypeptides family.

It localises to the cell membrane. Small polypeptide acting as a regulatory molecule which coordinates cellular responses required for differentiation, growth and development, probably by restricting polar cell proliferation in lateral organs and coordinating socket cell recruitment and differentiation at trichome sites. The chain is Small polypeptide DEVIL 20 from Arabidopsis thaliana (Mouse-ear cress).